Here is an 843-residue protein sequence, read N- to C-terminus: Protein MEI2-like 2 (843 aa).

2 consecutive RRM domains span residues 198 to 271 (RTLF…FSIP) and 283 to 356 (GTLV…LSRP).

Functionally, probable RNA-binding protein that plays a role in meiosis and vegetative growth. This Arabidopsis thaliana (Mouse-ear cress) protein is Protein MEI2-like 2 (ML2).